A 302-amino-acid polypeptide reads, in one-letter code: Decaprenyl-phosphate phosphoribosyltransferase (302 aa).

Residue Lys28 participates in 5-phospho-alpha-D-ribose 1-diphosphate binding. Helical transmembrane passes span Val30–Glu50 and Val55–Val75. Tyr70 lines the 5-phospho-alpha-D-ribose 1-diphosphate pocket. Residues Asn73 and Asp77 each contribute to the Mg(2+) site. Residue Lys87 coordinates 5-phospho-alpha-D-ribose 1-diphosphate. Helical transmembrane passes span Trp100 to Leu120 and Pro122 to Leu142. Lys143 and Arg160 together coordinate 5-phospho-alpha-D-ribose 1-diphosphate. Helical transmembrane passes span Ala146–Val166 and Ile170–Gly190. Lys191 contacts trans,octa-cis-decaprenyl phosphate. Helical transmembrane passes span Leu218 to Phe238, Ser244 to Val264, and Arg282 to Gly302.

The protein belongs to the UbiA prenyltransferase family. DPPR synthase subfamily. As to quaternary structure, homotrimer. Mg(2+) serves as cofactor.

The protein resides in the cell inner membrane. It catalyses the reaction trans,octa-cis-decaprenyl phosphate + 5-phospho-alpha-D-ribose 1-diphosphate + H(+) = trans,octa-cis-decaprenylphospho-beta-D-ribofuranose 5-phosphate + diphosphate. It functions in the pathway cell wall biogenesis; cell wall polysaccharide biosynthesis. Involved in the biosynthesis of decaprenylphosphoryl arabinose (DPA) a precursor for arabinan synthesis in mycobacterial cell wall biosynthesis. Catalyzes the transfer of a 5-phosphoribosyl residue from phosphoribose diphosphate (PRPP) to decaprenyl phosphate (DP) to form decaprenylphosphoryl-5-phosphoribose (DPPR). The polypeptide is Decaprenyl-phosphate phosphoribosyltransferase (Mycobacterium tuberculosis (strain CDC 1551 / Oshkosh)).